The primary structure comprises 432 residues: Adenylosuccinate synthetase (432 aa).

Residues 13 to 19 (GDEGKGK) and 41 to 43 (GHT) contribute to the GTP site. D14 acts as the Proton acceptor in catalysis. 2 residues coordinate Mg(2+): D14 and G41. IMP is bound by residues 14-17 (DEGK), 39-42 (NAGH), T130, R144, Q225, T240, and R304. Residue H42 is the Proton donor of the active site. 300–306 (ATTGRKR) is a substrate binding site. Residues R306, 332-334 (KLD), and 414-416 (STG) contribute to the GTP site.

This sequence belongs to the adenylosuccinate synthetase family. In terms of assembly, homodimer. Requires Mg(2+) as cofactor.

The protein localises to the cytoplasm. The enzyme catalyses IMP + L-aspartate + GTP = N(6)-(1,2-dicarboxyethyl)-AMP + GDP + phosphate + 2 H(+). Its pathway is purine metabolism; AMP biosynthesis via de novo pathway; AMP from IMP: step 1/2. Its function is as follows. Plays an important role in the de novo pathway of purine nucleotide biosynthesis. Catalyzes the first committed step in the biosynthesis of AMP from IMP. This chain is Adenylosuccinate synthetase, found in Alkalilimnicola ehrlichii (strain ATCC BAA-1101 / DSM 17681 / MLHE-1).